The following is a 92-amino-acid chain: MTRSLKKNPFVANHLLEKIEKLNMKEEKEIIVTWSRASTIIPTMIGHTIAIHNGKEHLPIYITDRMVGHKLGEFAPTLTFRGHARNDNKSRR.

It belongs to the universal ribosomal protein uS19 family.

The protein localises to the plastid. It is found in the chloroplast. In terms of biological role, protein S19 forms a complex with S13 that binds strongly to the 16S ribosomal RNA. This chain is Small ribosomal subunit protein uS19c, found in Acorus calamus (Sweet flag).